Here is a 342-residue protein sequence, read N- to C-terminus: Nucleoid-associated protein Sputcn32_2288 (342 aa).

Belongs to the YejK family.

It localises to the cytoplasm. The protein localises to the nucleoid. The sequence is that of Nucleoid-associated protein Sputcn32_2288 from Shewanella putrefaciens (strain CN-32 / ATCC BAA-453).